Reading from the N-terminus, the 175-residue chain is NADH-quinone oxidoreductase subunit B (175 aa).

[4Fe-4S] cluster contacts are provided by cysteine 49, cysteine 50, cysteine 115, and cysteine 145.

Belongs to the complex I 20 kDa subunit family. As to quaternary structure, NDH-1 is composed of 14 different subunits. Subunits NuoB, C, D, E, F, and G constitute the peripheral sector of the complex. [4Fe-4S] cluster is required as a cofactor.

It localises to the cell membrane. The catalysed reaction is a quinone + NADH + 5 H(+)(in) = a quinol + NAD(+) + 4 H(+)(out). Its function is as follows. NDH-1 shuttles electrons from NADH, via FMN and iron-sulfur (Fe-S) centers, to quinones in the respiratory chain. The immediate electron acceptor for the enzyme in this species is believed to be a menaquinone. Couples the redox reaction to proton translocation (for every two electrons transferred, four hydrogen ions are translocated across the cytoplasmic membrane), and thus conserves the redox energy in a proton gradient. This is NADH-quinone oxidoreductase subunit B from Heliobacterium modesticaldum (strain ATCC 51547 / Ice1).